Consider the following 156-residue polypeptide: Small ribosomal subunit protein uS7 (156 aa).

This sequence belongs to the universal ribosomal protein uS7 family. As to quaternary structure, part of the 30S ribosomal subunit. Contacts proteins S9 and S11.

In terms of biological role, one of the primary rRNA binding proteins, it binds directly to 16S rRNA where it nucleates assembly of the head domain of the 30S subunit. Is located at the subunit interface close to the decoding center, probably blocks exit of the E-site tRNA. In Rhizobium rhizogenes (strain K84 / ATCC BAA-868) (Agrobacterium radiobacter), this protein is Small ribosomal subunit protein uS7.